Here is a 325-residue protein sequence, read N- to C-terminus: Histone deacetylase 8 (325 aa).

The histone deacetylase stretch occupies residues Met1–Gly272. Asp49 serves as a coordination point for substrate. The active-site Proton acceptor is His91. Gly99 lines the substrate pocket. Residues Asp126, His128, and Asp215 each coordinate a divalent metal cation. Tyr254 is a substrate binding site.

It belongs to the histone deacetylase family. HD type 1 subfamily. A divalent metal cation serves as cofactor.

Its subcellular location is the nucleus. It is found in the chromosome. The protein localises to the cytoplasm. It carries out the reaction N(6)-acetyl-L-lysyl-[histone] + H2O = L-lysyl-[histone] + acetate. It catalyses the reaction N(6)-acetyl-L-lysyl-[protein] + H2O = L-lysyl-[protein] + acetate. The enzyme catalyses N(6)-(2E)-butenoyl-L-lysyl-[protein] + H2O = (2E)-2-butenoate + L-lysyl-[protein]. With respect to regulation, its activity is inhibited by trichostatin A (TSA) and butyrate, 2 well known histone deacetylase inhibitors. Its function is as follows. Histone deacetylase that catalyzes the deacetylation of lysine residues on the N-terminal part of the core histones (H2A, H2B, H3 and H4). Histone deacetylation gives a tag for epigenetic repression and plays an important role in transcriptional regulation, cell cycle progression and developmental events. Histone deacetylases act via the formation of large multiprotein complexes. Also involved in the deacetylation of non-histone proteins. In addition to protein deacetylase activity, also has protein-lysine deacylase activity: acts as a protein decrotonylase by mediating decrotonylation ((2E)-butenoyl) of histones. The protein is Histone deacetylase 8 (hdac8) of Xenopus laevis (African clawed frog).